We begin with the raw amino-acid sequence, 375 residues long: Succinyl-diaminopimelate desuccinylase (375 aa).

H66 is a binding site for Zn(2+). D68 is a catalytic residue. D99 is a Zn(2+) binding site. The Proton acceptor role is filled by E133. Positions 134, 162, and 348 each coordinate Zn(2+).

This sequence belongs to the peptidase M20A family. DapE subfamily. As to quaternary structure, homodimer. The cofactor is Zn(2+). Co(2+) is required as a cofactor.

It catalyses the reaction N-succinyl-(2S,6S)-2,6-diaminopimelate + H2O = (2S,6S)-2,6-diaminopimelate + succinate. It functions in the pathway amino-acid biosynthesis; L-lysine biosynthesis via DAP pathway; LL-2,6-diaminopimelate from (S)-tetrahydrodipicolinate (succinylase route): step 3/3. Functionally, catalyzes the hydrolysis of N-succinyl-L,L-diaminopimelic acid (SDAP), forming succinate and LL-2,6-diaminopimelate (DAP), an intermediate involved in the bacterial biosynthesis of lysine and meso-diaminopimelic acid, an essential component of bacterial cell walls. The protein is Succinyl-diaminopimelate desuccinylase of Erwinia tasmaniensis (strain DSM 17950 / CFBP 7177 / CIP 109463 / NCPPB 4357 / Et1/99).